Consider the following 460-residue polypeptide: Bifunctional protein GlmU (460 aa).

The segment at 1 to 229 (MTNYAIILAA…FNESLGVNDR (229 aa)) is pyrophosphorylase. UDP-N-acetyl-alpha-D-glucosamine contacts are provided by residues 8–11 (LAAG), K22, Q72, and 77–78 (GT). Residue D102 participates in Mg(2+) binding. G139, E154, N169, and N227 together coordinate UDP-N-acetyl-alpha-D-glucosamine. Mg(2+) is bound at residue N227. The tract at residues 230–250 (VALATAETVMRQRITQKHMVN) is linker. Positions 251-460 (GVTFHNPETV…RLAHHPSRSK (210 aa)) are N-acetyltransferase. UDP-N-acetyl-alpha-D-glucosamine contacts are provided by R332 and K350. Catalysis depends on H362, which acts as the Proton acceptor. UDP-N-acetyl-alpha-D-glucosamine is bound by residues Y365 and N376. Acetyl-CoA contacts are provided by residues A379, 385–386 (NY), S404, A422, and R439.

This sequence in the N-terminal section; belongs to the N-acetylglucosamine-1-phosphate uridyltransferase family. It in the C-terminal section; belongs to the transferase hexapeptide repeat family. As to quaternary structure, homotrimer. Requires Mg(2+) as cofactor.

The protein localises to the cytoplasm. It carries out the reaction alpha-D-glucosamine 1-phosphate + acetyl-CoA = N-acetyl-alpha-D-glucosamine 1-phosphate + CoA + H(+). The catalysed reaction is N-acetyl-alpha-D-glucosamine 1-phosphate + UTP + H(+) = UDP-N-acetyl-alpha-D-glucosamine + diphosphate. It functions in the pathway nucleotide-sugar biosynthesis; UDP-N-acetyl-alpha-D-glucosamine biosynthesis; N-acetyl-alpha-D-glucosamine 1-phosphate from alpha-D-glucosamine 6-phosphate (route II): step 2/2. The protein operates within nucleotide-sugar biosynthesis; UDP-N-acetyl-alpha-D-glucosamine biosynthesis; UDP-N-acetyl-alpha-D-glucosamine from N-acetyl-alpha-D-glucosamine 1-phosphate: step 1/1. Its pathway is bacterial outer membrane biogenesis; LPS lipid A biosynthesis. Catalyzes the last two sequential reactions in the de novo biosynthetic pathway for UDP-N-acetylglucosamine (UDP-GlcNAc). The C-terminal domain catalyzes the transfer of acetyl group from acetyl coenzyme A to glucosamine-1-phosphate (GlcN-1-P) to produce N-acetylglucosamine-1-phosphate (GlcNAc-1-P), which is converted into UDP-GlcNAc by the transfer of uridine 5-monophosphate (from uridine 5-triphosphate), a reaction catalyzed by the N-terminal domain. This is Bifunctional protein GlmU from Streptococcus pyogenes serotype M49 (strain NZ131).